We begin with the raw amino-acid sequence, 325 residues long: Malate dehydrogenase (325 aa).

Residue 11–17 (GAAGHVS) participates in NAD(+) binding. Substrate is bound by residues Arg92 and Arg98. NAD(+) is bound by residues Asn105, Gln112, and 129–131 (VGN). Residues Asn131 and Arg162 each coordinate substrate. The active-site Proton acceptor is the His187.

It belongs to the LDH/MDH superfamily. MDH type 2 family.

It catalyses the reaction (S)-malate + NAD(+) = oxaloacetate + NADH + H(+). Its function is as follows. Catalyzes the reversible oxidation of malate to oxaloacetate. The sequence is that of Malate dehydrogenase from Desulfotalea psychrophila (strain LSv54 / DSM 12343).